We begin with the raw amino-acid sequence, 543 residues long: Phenylalanine--tRNA ligase beta subunit (543 aa).

Residues 269–344 (FDFRIMRPAR…KSKGIENIEE (76 aa)) enclose the B5 domain. Positions 322, 328, 331, and 332 each coordinate Mg(2+).

This sequence belongs to the phenylalanyl-tRNA synthetase beta subunit family. Type 2 subfamily. As to quaternary structure, tetramer of two alpha and two beta subunits. The cofactor is Mg(2+).

Its subcellular location is the cytoplasm. The catalysed reaction is tRNA(Phe) + L-phenylalanine + ATP = L-phenylalanyl-tRNA(Phe) + AMP + diphosphate + H(+). This Thermoplasma acidophilum (strain ATCC 25905 / DSM 1728 / JCM 9062 / NBRC 15155 / AMRC-C165) protein is Phenylalanine--tRNA ligase beta subunit.